The chain runs to 106 residues: Secreted RxLR effector protein 18 (106 aa).

The first 17 residues, 1–17, serve as a signal peptide directing secretion; that stretch reads MRGSTAMLLAAIALFSS. A RxLR-dEER motif is present at residues 28–39; it reads RTLRSFEELEER.

Belongs to the RxLR effector family.

Its subcellular location is the secreted. The protein localises to the host cell. Effector that may act as a suppressor of cell death to interrupt plant immunity. I. The protein is Secreted RxLR effector protein 18 of Plasmopara viticola (Downy mildew of grapevine).